Consider the following 2149-residue polypeptide: Serine/threonine-protein kinase WNK2 (2149 aa).

Residues 1–10 are compositionally biased toward basic and acidic residues; the sequence is MDGDGGRRDA. Disordered regions lie at residues 1-75 and 87-183; these read MDGD…QRRV and ERAR…EDDL. Omega-N-methylarginine is present on residues R19 and R30. S45 carries the phosphoserine modification. Pro residues predominate over residues 95–114; the sequence is APAPAAPAAPPGSPSVPSDP. The span at 161–172 shows a compositional bias: basic and acidic residues; the sequence is AKPEPGRARKDE. Over residues 173–182 the composition is skewed to acidic residues; it reads PEEEEDDEDD. The 259-residue stretch at 195 to 453 folds into the Protein kinase domain; that stretch reads LKFDIELGRG…IKDLLSHAFF (259 aa). ATP is bound by residues S205, 275 to 278, and K325; that span reads TELM. The Proton acceptor role is filled by D342. S352 and S356 each carry phosphoserine; by autocatalysis. S560 carries the post-translational modification Phosphoserine. Disordered regions lie at residues 578 to 630, 703 to 728, and 1067 to 1133; these read HAQS…DSQS, SMSF…APPV, and QEEQ…ERAS. Residues 605–625 are compositionally biased toward polar residues; the sequence is ASVTSLASDSTFDSGQGSTVY. Positions 709-728 are enriched in pro residues; that stretch reads VLPPPSTPVPTGPSQPAPPV. Polar residues predominate over residues 1081–1092; the sequence is QSSESFGGSDVT. S1098 is subject to Phosphoserine. The segment covering 1115–1126 has biased composition (basic residues); it reads ARKHHRRSTRAR. S1210 carries the post-translational modification Phosphoserine. Disordered stretches follow at residues 1211–1234 and 1270–1502; these read EDTD…CGLA and PATD…GFVD. Low complexity-rich tracts occupy residues 1275-1292 and 1317-1353; these read SESS…EASQ and SQAG…STVP. The segment covering 1386-1400 has biased composition (polar residues); the sequence is RSAQCTAQPLSTGQG. Residues 1470–1485 are compositionally biased toward pro residues; that stretch reads LPSPPLGPTAPPPPPS. S1507, S1566, and S1594 each carry phosphoserine. Disordered stretches follow at residues 1521–1727 and 1739–1778; these read VPTS…PSSP and ASSI…GGVA. Positions 1553–1567 are enriched in polar residues; it reads SDKTPSLTQQTQPSL. Residues 1587–1597 show a composition bias toward low complexity; that stretch reads SSPMTAESSSS. The segment covering 1610–1629 has biased composition (polar residues); sequence ASDSSTAPSVPQDASGSSVP. Phosphoserine is present on residues S1725, S1726, S1770, and S1797. A compositionally biased stretch (polar residues) spans 1916–1928; that stretch reads ASSTGHLSDSSRG. The segment at 1916-1947 is disordered; it reads ASSTGHLSDSSRGPPTKDPRGTKAVQTQQPCS. The residue at position 1962 (S1962) is a Phosphoserine. Over residues 2018–2031 the composition is skewed to polar residues; it reads SSLYDSPGSSTSSL. Disordered stretches follow at residues 2018-2044 and 2122-2149; these read SSLY…PTLH and GPLS…EKPD. The segment covering 2122 to 2135 has biased composition (low complexity); that stretch reads GPLSTTATPGATPA.

The protein belongs to the protein kinase superfamily. Ser/Thr protein kinase family. WNK subfamily. As to quaternary structure, forms a complex with the phosphorylated form of STK39 in the brain. Mg(2+) serves as cofactor. In terms of processing, autophosphorylated. Autophosphorylation at Ser-352 and Ser-356 promotes its activity. Brain and heart.

It localises to the cytoplasm. The protein localises to the cell membrane. The enzyme catalyses L-seryl-[protein] + ATP = O-phospho-L-seryl-[protein] + ADP + H(+). The catalysed reaction is L-threonyl-[protein] + ATP = O-phospho-L-threonyl-[protein] + ADP + H(+). Its activity is regulated as follows. Activation requires autophosphorylation of Ser-356 and, to a lower extent, Ser-352. Functionally, serine/threonine-protein kinase component of the WNK2-SPAK/OSR1 kinase cascade, which plays an important role in the regulation of electrolyte homeostasis, cell signaling, survival, and proliferation. The WNK2-SPAK/OSR1 kinase cascade is composed of WNK2, which mediates phosphorylation and activation of downstream kinases OXSR1/OSR1 and STK39/SPAK. Following activation, OXSR1/OSR1 and STK39/SPAK catalyze phosphorylation of ion cotransporters, regulating their activity. Acts as an activator and inhibitor of sodium-coupled chloride cotransporters and potassium-coupled chloride cotransporters respectively. Activates SLC12A2, SCNN1A, SCNN1B, SCNN1D and SGK1 and inhibits SLC12A5. Negatively regulates the EGF-induced activation of the ERK/MAPK-pathway and the downstream cell cycle progression. Affects MAPK3/MAPK1 activity by modulating the activity of MAP2K1 and this modulation depends on phosphorylation of MAP2K1 by PAK1. WNK2 acts by interfering with the activity of PAK1 by controlling the balance of the activity of upstream regulators of PAK1 activity, RHOA and RAC1, which display reciprocal activity. This chain is Serine/threonine-protein kinase WNK2, found in Mus musculus (Mouse).